The following is a 339-amino-acid chain: D-erythrose-4-phosphate dehydrogenase (339 aa).

11-12 (RI) contacts NAD(+). Residues 158-160 (SCT), Arg-204, 217-218 (TK), and Arg-240 contribute to the substrate site. Catalysis depends on Cys-159, which acts as the Nucleophile. Residue Asn-322 participates in NAD(+) binding.

It belongs to the glyceraldehyde-3-phosphate dehydrogenase family. Epd subfamily. As to quaternary structure, homotetramer.

It localises to the cytoplasm. It carries out the reaction D-erythrose 4-phosphate + NAD(+) + H2O = 4-phospho-D-erythronate + NADH + 2 H(+). It participates in cofactor biosynthesis; pyridoxine 5'-phosphate biosynthesis; pyridoxine 5'-phosphate from D-erythrose 4-phosphate: step 1/5. Its function is as follows. Catalyzes the NAD-dependent conversion of D-erythrose 4-phosphate to 4-phosphoerythronate. This Aliivibrio salmonicida (strain LFI1238) (Vibrio salmonicida (strain LFI1238)) protein is D-erythrose-4-phosphate dehydrogenase.